The primary structure comprises 198 residues: Angiopoietin-like protein 8 (198 aa).

Residues 1 to 21 (MPVPALCLLWALAMVTRPASA) form the signal peptide.

This sequence belongs to the ANGPTL8 family. As to quaternary structure, interacts with ANGPTL3. In terms of processing, proteolytically cleaved at the N-terminus. As to expression, predominantly expressed in liver. Also expressed in adipose tissues.

The protein localises to the secreted. In terms of biological role, hormone that acts as a blood lipid regulator by regulating serum triglyceride levels. May be involved in the metabolic transition between fasting and refeeding: required to direct fatty acids to adipose tissue for storage in the fed state. This chain is Angiopoietin-like protein 8, found in Homo sapiens (Human).